The chain runs to 176 residues: Small ribosomal subunit protein uS4 (176 aa).

Residues Arg103–Leu165 enclose the S4 RNA-binding domain.

It belongs to the universal ribosomal protein uS4 family. As to quaternary structure, part of the 30S ribosomal subunit. Contacts protein S5. The interaction surface between S4 and S5 is involved in control of translational fidelity.

Its function is as follows. One of the primary rRNA binding proteins, it binds directly to 16S rRNA where it nucleates assembly of the body of the 30S subunit. Functionally, with S5 and S12 plays an important role in translational accuracy. This Hyperthermus butylicus (strain DSM 5456 / JCM 9403 / PLM1-5) protein is Small ribosomal subunit protein uS4.